Consider the following 210-residue polypeptide: Large ribosomal subunit protein uL3 (210 aa).

The disordered stretch occupies residues 125 to 151 (RHGQSRGPMSHGSRYHRRPGSMGPVAP).

It belongs to the universal ribosomal protein uL3 family. Part of the 50S ribosomal subunit. Forms a cluster with proteins L14 and L19.

In terms of biological role, one of the primary rRNA binding proteins, it binds directly near the 3'-end of the 23S rRNA, where it nucleates assembly of the 50S subunit. In Bacillus cereus (strain Q1), this protein is Large ribosomal subunit protein uL3.